We begin with the raw amino-acid sequence, 313 residues long: MSLHSSLDPKAFGRVAVLFGGKSAEREVSLKSGNAVLSALQAAGVDAFGIDVGDDFLQRLASEKIDRAFIVLHGRGGEDGSMQGLLECAGIPYTGSGILASALAMDKLRTKQVWHSLGLPTPRHAVLTSQADCEAAAAELGFPLIVKPAHEGSSIGMAKVESVEALIAAWQDAARYDSQVLVEQWIAGPEYTVAVLRGEVLPPIGLGTPHSFYDYDAKYLADDTQYRIPCGLSAEKEAELKELTARACEAVGTQGWARADVMQDASGQFWLLEVNTVPGMTDHSLVPMAARAAGLDFQQLVLAILADSVEARG.

The ATP-grasp domain maps to 111-306; sequence KQVWHSLGLP…FQQLVLAILA (196 aa). 137–192 provides a ligand contact to ATP; sequence AAELGFPLIVKPAHEGSSIGMAKVESVEALIAAWQDAARYDSQVLVEQWIAGPEYT. D260, E273, and N275 together coordinate Mg(2+).

It belongs to the D-alanine--D-alanine ligase family. It depends on Mg(2+) as a cofactor. Mn(2+) is required as a cofactor.

Its subcellular location is the cytoplasm. The catalysed reaction is 2 D-alanine + ATP = D-alanyl-D-alanine + ADP + phosphate + H(+). It participates in cell wall biogenesis; peptidoglycan biosynthesis. Cell wall formation. The chain is D-alanine--D-alanine ligase from Ectopseudomonas mendocina (strain ymp) (Pseudomonas mendocina).